The chain runs to 1481 residues: ABC multidrug transporter atrH (1481 aa).

Over residues 1–10 the composition is skewed to basic and acidic residues; that stretch reads MALPREERSL. Disordered regions lie at residues 1-45 and 61-89; these read MALP…GIEQ and ISQT…SDQF. Asn-19, Asn-76, and Asn-320 each carry an N-linked (GlcNAc...) asparagine glycan. One can recognise an ABC transporter 1 domain in the interval 134–396; sequence ATVSNVWLKA…FIEMGFDCPE (263 aa). A helical transmembrane segment spans residues 507–527; sequence MTLSTVIGNSILALIISSVFY. Asn-530 carries N-linked (GlcNAc...) asparagine glycosylation. 5 helical membrane-spanning segments follow: residues 542–562, 587–607, 616–636, 650–670, and 758–778; these read LLFF…LTLW, LIVD…ILYF, GHFF…SNVF, EVPA…TIPV, and FGIL…ASEL. In terms of domain architecture, ABC transporter 2 spans 838 to 1081; sequence FHWQDVCYDI…LIKYFEDKGS (244 aa). 874 to 881 is an ATP binding site; the sequence is GVTGAGKT. Helical transmembrane passes span 1174–1194, 1210–1230, 1249–1269, 1298–1318, 1327–1347, and 1358–1378; these read YIYA…FTFW, IFML…YFAM, AFML…AVPA, LLVL…IAGI, IAQL…SPDV, and ASPF…GAPV. Asn-1395 carries N-linked (GlcNAc...) asparagine glycosylation. Residues 1446-1466 traverse the membrane as a helical segment; the sequence is VGILFVYIVFNTVAAVFLYWL.

The protein belongs to the ABC transporter superfamily. ABCG family. PDR (TC 3.A.1.205) subfamily.

The protein resides in the cell membrane. In terms of biological role, pleiotropic ABC efflux transporter involved in the basal level of azole susceptibility. This is ABC multidrug transporter atrH from Aspergillus oryzae (strain ATCC 42149 / RIB 40) (Yellow koji mold).